A 525-amino-acid chain; its full sequence is ATP synthase subunit alpha (525 aa).

An ATP-binding site is contributed by 169-176 (GDRQTGKT).

The protein belongs to the ATPase alpha/beta chains family. In terms of assembly, F-type ATPases have 2 components, CF(1) - the catalytic core - and CF(0) - the membrane proton channel. CF(1) has five subunits: alpha(3), beta(3), gamma(1), delta(1), epsilon(1). CF(0) has three main subunits: a(1), b(2) and c(9-12). The alpha and beta chains form an alternating ring which encloses part of the gamma chain. CF(1) is attached to CF(0) by a central stalk formed by the gamma and epsilon chains, while a peripheral stalk is formed by the delta and b chains.

It is found in the cell membrane. It catalyses the reaction ATP + H2O + 4 H(+)(in) = ADP + phosphate + 5 H(+)(out). In terms of biological role, produces ATP from ADP in the presence of a proton gradient across the membrane. The alpha chain is a regulatory subunit. This Mycoplasma mycoides subsp. mycoides SC (strain CCUG 32753 / NCTC 10114 / PG1) protein is ATP synthase subunit alpha.